A 406-amino-acid polypeptide reads, in one-letter code: Bifunctional enzyme IspD/IspF (406 aa).

Residues 1 to 246 (MLQMPSKQPI…KLSASLLPDV (246 aa)) form a 2-C-methyl-D-erythritol 4-phosphate cytidylyltransferase region. The 2-C-methyl-D-erythritol 2,4-cyclodiphosphate synthase stretch occupies residues 247–406 (RTGNGYDVHQ…ATVVYRGVKR (160 aa)). D253 and H255 together coordinate a divalent metal cation. Residues 253–255 (DVH) and 279–280 (HS) contribute to the 4-CDP-2-C-methyl-D-erythritol 2-phosphate site. Residue H287 participates in a divalent metal cation binding. 4-CDP-2-C-methyl-D-erythritol 2-phosphate-binding positions include 301-303 (DIG), 377-380 (TTNE), F384, and R387.

In the N-terminal section; belongs to the IspD/TarI cytidylyltransferase family. IspD subfamily. It in the C-terminal section; belongs to the IspF family. A divalent metal cation is required as a cofactor.

It carries out the reaction 2-C-methyl-D-erythritol 4-phosphate + CTP + H(+) = 4-CDP-2-C-methyl-D-erythritol + diphosphate. The enzyme catalyses 4-CDP-2-C-methyl-D-erythritol 2-phosphate = 2-C-methyl-D-erythritol 2,4-cyclic diphosphate + CMP. It functions in the pathway isoprenoid biosynthesis; isopentenyl diphosphate biosynthesis via DXP pathway; isopentenyl diphosphate from 1-deoxy-D-xylulose 5-phosphate: step 2/6. It participates in isoprenoid biosynthesis; isopentenyl diphosphate biosynthesis via DXP pathway; isopentenyl diphosphate from 1-deoxy-D-xylulose 5-phosphate: step 4/6. Bifunctional enzyme that catalyzes the formation of 4-diphosphocytidyl-2-C-methyl-D-erythritol from CTP and 2-C-methyl-D-erythritol 4-phosphate (MEP) (IspD), and catalyzes the conversion of 4-diphosphocytidyl-2-C-methyl-D-erythritol 2-phosphate (CDP-ME2P) to 2-C-methyl-D-erythritol 2,4-cyclodiphosphate (ME-CPP) with a corresponding release of cytidine 5-monophosphate (CMP) (IspF). The polypeptide is Bifunctional enzyme IspD/IspF (Rhizobium leguminosarum bv. trifolii (strain WSM2304)).